Here is a 285-residue protein sequence, read N- to C-terminus: Mitochondrial substrate carrier family protein S (285 aa).

The Mitochondrial intermembrane segment spans residues 1 to 9 (MSTERGLKD). Solcar repeat units lie at residues 4–87 (ERGL…MKVL), 96–183 (LTVG…CKRY), and 197–283 (LNLP…VIKL). Residues 10–30 (SIAGTVAGAACLFTGHPFDTI) form a helical membrane-spanning segment. The Mitochondrial matrix portion of the chain corresponds to 31–61 (RVRLQTSNTPIGIMECFRNTIKYEGFSGLYK). The helical transmembrane segment at 62–82 (GVTSPLFGMMFETAVLFAGYG) threads the bilayer. Residues 83-101 (QMKVLLQKDENTPLTVGQC) lie on the Mitochondrial intermembrane side of the membrane. A helical membrane pass occupies residues 102 to 122 (AIAGGFAGVGASVVLTPVELV). Residues 123-150 (KCRLQVQTTGPQKYKGSLDCLVQILKEG) lie on the Mitochondrial matrix side of the membrane. The helical transmembrane segment at 151–172 (GIRGAYRGFTPTIAREFVGNMA) threads the bilayer. Topologically, residues 173–199 (FFSTYETCKRYFKNKENKPNDDDELNL) are mitochondrial intermembrane. Residues 200-220 (PALIISGGLGGMAYWTVLYPV) traverse the membrane as a helical segment. Residues 221–258 (DVAKSKIQISEGAGPSPSIVKVLKEIYSKEGVKGLFRG) lie on the Mitochondrial matrix side of the membrane. Residues 259 to 277 (YTPTIIRSFPANAAMFSVY) traverse the membrane as a helical segment. Over 278–285 (ELVIKLLG) the chain is Mitochondrial intermembrane.

Belongs to the mitochondrial carrier (TC 2.A.29) family.

The protein localises to the mitochondrion inner membrane. Functionally, mitochondrial solute carriers shuttle metabolites, nucleotides, and cofactors through the mitochondrial inner membrane. Mediates the transport of acylcarnitines of different length across the mitochondrial inner membrane from the cytosol to the mitochondrial matrix for their oxidation by the mitochondrial fatty acid-oxidation pathway. The chain is Mitochondrial substrate carrier family protein S (mcfS) from Dictyostelium discoideum (Social amoeba).